The chain runs to 119 residues: Large ribosomal subunit protein bL12 (119 aa).

Belongs to the bacterial ribosomal protein bL12 family. In terms of assembly, homodimer. Part of the ribosomal stalk of the 50S ribosomal subunit. Forms a multimeric L10(L12)X complex, where L10 forms an elongated spine to which 2 to 4 L12 dimers bind in a sequential fashion. Binds GTP-bound translation factors.

Its function is as follows. Forms part of the ribosomal stalk which helps the ribosome interact with GTP-bound translation factors. Is thus essential for accurate translation. The protein is Large ribosomal subunit protein bL12 of Colwellia psychrerythraea (strain 34H / ATCC BAA-681) (Vibrio psychroerythus).